We begin with the raw amino-acid sequence, 197 residues long: Small ribosomal subunit protein uS4B (197 aa).

An S4 RNA-binding domain is found at 88-150; that stretch reads SRLDNMVYRM…SRKTEMFVNN (63 aa).

Belongs to the universal ribosomal protein uS4 family. As to quaternary structure, part of the 30S ribosomal subunit. Contacts protein S5. The interaction surface between S4 and S5 is involved in control of translational fidelity.

One of the primary rRNA binding proteins, it binds directly to 16S rRNA where it nucleates assembly of the body of the 30S subunit. Functionally, with S5 and S12 plays an important role in translational accuracy. The sequence is that of Small ribosomal subunit protein uS4B (rpsD2) from Clostridium perfringens (strain 13 / Type A).